Reading from the N-terminus, the 60-residue chain is Mastoparan-VT4 (60 aa).

The first 27 residues, 1–27 (MKNPILILFTAFIALLGFFGMSAEALA), serve as a signal peptide directing secretion. 4 AXPX repeats span residues 27–30 (ADPK), 31–34 (ADPL), 35–38 (AGPN), and 41–44 (ADPE). The propeptide occupies 28 to 45 (DPKADPLAGPNPDADPEA). Residue Leu-59 is modified to Leucine amide.

This sequence belongs to the MCD family. Mastoparan subfamily. As to expression, expressed by the venom gland.

It is found in the secreted. Its function is as follows. The synthetic peptide shows antimicrobial activities against Gram-negative bacteria (but not against all strains tested), Gram-positive bacteria (not all strains tested) and the fungi C.albicans and C.parapsilosis. Exhibits little hemolytic activity against washed human erythrocytes. The polypeptide is Mastoparan-VT4 (Vespa tropica (Greater banded hornet)).